Here is a 317-residue protein sequence, read N- to C-terminus: tRNA(Ile)-lysidine synthase (317 aa).

32–37 (SGGVDS) is a binding site for ATP.

This sequence belongs to the tRNA(Ile)-lysidine synthase family.

The protein resides in the cytoplasm. It carries out the reaction cytidine(34) in tRNA(Ile2) + L-lysine + ATP = lysidine(34) in tRNA(Ile2) + AMP + diphosphate + H(+). In terms of biological role, ligates lysine onto the cytidine present at position 34 of the AUA codon-specific tRNA(Ile) that contains the anticodon CAU, in an ATP-dependent manner. Cytidine is converted to lysidine, thus changing the amino acid specificity of the tRNA from methionine to isoleucine. This chain is tRNA(Ile)-lysidine synthase, found in Aquifex aeolicus (strain VF5).